The sequence spans 475 residues: Ribulose bisphosphate carboxylase large chain (475 aa).

Positions 1-2 (MV) are excised as a propeptide. An N-acetylproline modification is found at Pro-3. Lys-14 carries the N6,N6,N6-trimethyllysine modification. Substrate-binding residues include Asn-123 and Thr-173. Catalysis depends on Lys-175, which acts as the Proton acceptor. A substrate-binding site is contributed by Lys-177. Residues Lys-201, Asp-203, and Glu-204 each coordinate Mg(2+). Position 201 is an N6-carboxylysine (Lys-201). Catalysis depends on His-294, which acts as the Proton acceptor. Residues Arg-295, His-327, and Ser-379 each contribute to the substrate site.

Belongs to the RuBisCO large chain family. Type I subfamily. As to quaternary structure, heterohexadecamer of 8 large chains and 8 small chains. Requires Mg(2+) as cofactor.

Its subcellular location is the plastid. It is found in the chloroplast. The catalysed reaction is 2 (2R)-3-phosphoglycerate + 2 H(+) = D-ribulose 1,5-bisphosphate + CO2 + H2O. It catalyses the reaction D-ribulose 1,5-bisphosphate + O2 = 2-phosphoglycolate + (2R)-3-phosphoglycerate + 2 H(+). Its function is as follows. RuBisCO catalyzes two reactions: the carboxylation of D-ribulose 1,5-bisphosphate, the primary event in carbon dioxide fixation, as well as the oxidative fragmentation of the pentose substrate in the photorespiration process. Both reactions occur simultaneously and in competition at the same active site. This chain is Ribulose bisphosphate carboxylase large chain, found in Dunaliella tertiolecta (Green alga).